The sequence spans 524 residues: Cytochrome P450 monooxygenase oblB (524 aa).

Transmembrane regions (helical) follow at residues isoleucine 18–isoleucine 38, phenylalanine 225–isoleucine 245, and valine 322–isoleucine 342. Cysteine 466 provides a ligand contact to heme.

It belongs to the cytochrome P450 family. Heme serves as cofactor.

It localises to the membrane. It carries out the reaction ophiobolin F + 4 reduced [NADPH--hemoprotein reductase] + 4 O2 = ophiobolin C + 4 oxidized [NADPH--hemoprotein reductase] + 6 H2O + 4 H(+). It participates in secondary metabolite biosynthesis; terpenoid biosynthesis. Cytochrome P450 monooxygenase; part of the gene cluster that mediates the biosynthesis of the sesterterpenes ophiobolins, fungal phytotoxins with potential anti-cancer activities. The first step of the pathway is performed by the sesterterpene synthase oblA that possesses both prenyl transferase and terpene cyclase activity, converting isopentenyl diphosphate and dimethylallyl diphosphate into geranylfarnesyl diphosphate (GFPP) and further converting GFPP into ophiobolin F, respectively. Other sesterterpenoids (C(25) terpenoids) are found as minor products of oblA. The cytochrome P450 monooxygenase oblB then catalyzes a four-step oxidative transformation of ophiobolin F to yield ophiobolin C. The FAD-dependent oxidoreductase oblC might be involved in a later oxidation step that produces ophiobolin A. The sequence is that of Cytochrome P450 monooxygenase oblB from Cochliobolus heterostrophus (strain C5 / ATCC 48332 / race O) (Southern corn leaf blight fungus).